The primary structure comprises 394 residues: RHOMBOID-like protein 4 (394 aa).

A disordered region spans residues 1–51; that stretch reads MGEKDSETAPIWGKTRERERSNNNNIQPMDLESSSSVSGQQRSLTQSRSSY. Residues 39-49 are compositionally biased toward polar residues; the sequence is GQQRSLTQSRS. Transmembrane regions (helical) follow at residues 64-84, 147-167, 175-195, 201-221, 231-251, 254-274, and 300-320; these read WFPW…VITM, WLHG…FIGI, FIRI…LSAL, ISVG…SEIF, VVTI…GVLP, DNFA…VLLI, and ILWT…LISL. Ser-206 (nucleophile) is an active-site residue. Catalysis depends on His-258, which acts as the Charge relay system.

Belongs to the peptidase S54 family.

It localises to the membrane. The catalysed reaction is Cleaves type-1 transmembrane domains using a catalytic dyad composed of serine and histidine that are contributed by different transmembrane domains.. Its function is as follows. Probable rhomboid-type serine protease that catalyzes intramembrane proteolysis. This is RHOMBOID-like protein 4 from Arabidopsis thaliana (Mouse-ear cress).